Reading from the N-terminus, the 35-residue chain is Z-limacoditoxin(1)-Dv1 (35 aa).

Residues 1–22 form the signal peptide; that stretch reads MKKTFLPIFLVILLASYALANP. Gln-23 is subject to Pyrrolidone carboxylic acid. Pro-32 carries the proline amide modification.

It belongs to the limacoditoxin-1 (ACP-like) family. As to expression, expressed by the venom secretory cell of the spine. The spine is a cuticular structure containing a single large nucleated venom-secreting cell at its base. It is an independent unit capable of producing, storing and injecting venom. On the back of D.vulnerans caterpillars, spines are grouped together by 50 to 100 to form scoli, of which there are eight in D.vulnerans.

The protein localises to the secreted. Potently activates insect G protein-coupled receptor. It activates the ACP receptor (ACPR) from the mosquito A.aegypti (EC(50)=0.55 nM) with a potency comparable to that of the endogenous ligand. Has no activity on receptors of the closely related neuropeptides adipokinetic hormone and corazonin. In vivo, does not reveal any observable effects when injected into crickets (A.domesticus). Does not induce increase in intracellular calcium in mouse DRG neurons, suggesting that it does not induce pain. This chain is Z-limacoditoxin(1)-Dv1, found in Doratifera vulnerans (Mottled cup moth).